The chain runs to 262 residues: MGKYNLTALRVRQIAVAQQSAGKLRQTPKWLDIMHDVPPTEVLVRNRPQQHQLVRQRLKTVPGASRPQAVFEVQEKRIKPKKASRMFQPVEIKYEEDQLRKEFFRDHPWELARPRVLVEKSGKDFERYNWSRLQQRGKHLDGESVVQRQLWLLNNVPDMTKSAAYDIARREFYRLRLQEDIERRVAAEEAEATGAVFGPTRLQIGMDLENKEYERWKEWAKLQAQLSDQRMAAFLGAPEVQAAEEQETSLDDDATEKVAVAA.

A compositionally biased stretch (acidic residues) spans 242-254 (AAEEQETSLDDDA). The segment at 242 to 262 (AAEEQETSLDDDATEKVAVAA) is disordered.

It belongs to the mitochondrion-specific ribosomal protein mS23 family. Component of the mitochondrial small ribosomal subunit.

Its subcellular location is the mitochondrion. The sequence is that of Small ribosomal subunit protein mS23 (rsm25) from Aspergillus niger (strain ATCC MYA-4892 / CBS 513.88 / FGSC A1513).